We begin with the raw amino-acid sequence, 95 residues long: Gas vesicle protein S (95 aa).

It belongs to the gas vesicle GvpA family.

The protein localises to the gas vesicle. Probably a minor component of the gas vesicle. It is not clear what function gas vesicles perform in soil bacteria. Its function is as follows. When a minimal gvp locus (gvpA2-gvpR-gvpN-gvpF-gvpG-gvpL-gvpS-gvpK-gvpJ-gvpT-gvpU, called pNL29) is expressed in E.coli gas vesicles are made. In Priestia megaterium (Bacillus megaterium), this protein is Gas vesicle protein S.